Reading from the N-terminus, the 784-residue chain is Probable aminopeptidase 1 (784 aa).

Substrate contacts are provided by residues Glu-103 and 236–240 (GAMEN). Zn(2+) is bound at residue His-271. The Proton acceptor role is filled by Glu-272. Positions 275 and 294 each coordinate Zn(2+).

It belongs to the peptidase M1 family. Zn(2+) serves as cofactor.

The protein resides in the cytoplasm. This is Probable aminopeptidase 1 (ape1) from Saccharolobus solfataricus (strain ATCC 35092 / DSM 1617 / JCM 11322 / P2) (Sulfolobus solfataricus).